A 465-amino-acid chain; its full sequence is Mothers against decapentaplegic homolog 5 (465 aa).

T2 is subject to N-acetylthreonine. One can recognise an MH1 domain in the interval 13 to 137 (PAVKRLLGWK…YKRVESPVLP (125 aa)). Residues C65, C110, C122, and H127 each contribute to the Zn(2+) site. The segment at 163–249 (NEPHMPQNAT…PMDTSNNMIP (87 aa)) is disordered. The segment covering 169–182 (QNATFPDSFHQPNN) has biased composition (polar residues). Over residues 186-197 (PLSPNSPYPPSP) the composition is skewed to pro residues. Over residues 198–214 (ASSTYPNSPASSGPGSP) the composition is skewed to low complexity. Positions 234 to 249 (GQDNSQPMDTSNNMIP) are enriched in polar residues. Residues 271–465 (WCSIVYYELN…SPLNPISSVS (195 aa)) form the MH2 domain. Phosphoserine occurs at positions 463 and 465.

It belongs to the dwarfin/SMAD family. Homodimer. Forms trimers with the co-SMAD SMAD4. Interacts with PEBP2-alpha subunit and SMURF1. Interacts with SUV39H1 and SUV39H2. Interacts (via MH2 domain) with LEMD3. Interacts with WWP1. Interacts with TMEM119. Interacts with ZNF8. Interacts with RANBP3L. Interacts with HK1. Interacts with HGS; this interaction attenuates BMP signaling. In terms of processing, phosphorylated on serine by BMP (bone morphogenetic proteins) type 1 receptor kinase. Post-translationally, ubiquitin-mediated proteolysis by SMAD-specific E3 ubiquitin ligase SMURF1. In terms of tissue distribution, ubiquitous.

It localises to the cytoplasm. Its subcellular location is the nucleus. It is found in the mitochondrion. In terms of biological role, transcriptional regulator that plays a role in various cellular processes including embryonic development, cell differentiation, angiogenesis and tissue homeostasis. Upon BMP ligand binding to their receptors at the cell surface, is phosphorylated by activated type I BMP receptors (BMPRIs) and associates with SMAD4 to form a heteromeric complex which translocates into the nucleus acting as transcription factor. In turn, the hetero-trimeric complex recognizes cis-regulatory elements containing Smad Binding Elements (SBEs) to modulate the outcome of the signaling network. Non-phosphorylated SMAD5 has a cytoplasmic role in energy metabolism regulation by promoting mitochondrial respiration and glycolysis in response to cytoplasmic pH changes. Mechanistically, interacts with hexokinase 1/HK1 and thereby accelerates glycolysis. The chain is Mothers against decapentaplegic homolog 5 (SMAD5) from Homo sapiens (Human).